A 732-amino-acid polypeptide reads, in one-letter code: 1,4-alpha-glucan branching enzyme GlgB (732 aa).

D415 acts as the Nucleophile in catalysis. Residue E468 is the Proton donor of the active site.

It belongs to the glycosyl hydrolase 13 family. GlgB subfamily. As to quaternary structure, monomer.

The catalysed reaction is Transfers a segment of a (1-&gt;4)-alpha-D-glucan chain to a primary hydroxy group in a similar glucan chain.. Its pathway is glycan biosynthesis; glycogen biosynthesis. Functionally, catalyzes the formation of the alpha-1,6-glucosidic linkages in glycogen by scission of a 1,4-alpha-linked oligosaccharide from growing alpha-1,4-glucan chains and the subsequent attachment of the oligosaccharide to the alpha-1,6 position. This Nitrosomonas eutropha (strain DSM 101675 / C91 / Nm57) protein is 1,4-alpha-glucan branching enzyme GlgB.